Consider the following 448-residue polypeptide: MNSPSLPAVERLDVQAFINAQPLSPYQWRIVLLCFLIVFLDGLDTAAMGFIAPALTQDWGIDRASLGPVMSAALIGMVFGALGSGPLADRYGRKLVLVAAVFLFGLFSLASAYSTNVEQLLALRFLTGLGLGAAMPNATTLLSEYTPERLKSLLVTSMFCGFNLGMACGGFVSAKLIPLFGWHSLLLLGGLLPLVLAVVLLFRLPESARYLVVRNRGSERVRQVLAPIAPAQVALARSFHVPEQQTVQARNVFAVIFSGTYSAGTLLLWLTYFMGLVIVYLLTSWLPTLMRDSGASLEQAAFIGALFQFGGVLSAVAVGWAMDRFNPHKVIGLFYLLAGVFAWCVGQSLGQVTLLATLVLLAGMCINGAQSAMPSLAARFYPTQGRATGVSWMLGIGRFGAILGAWIGATLLGLGWNFEQVLTALVLPAALATAAVLLKGLVSHADAG.

Residues 1 to 30 (MNSPSLPAVERLDVQAFINAQPLSPYQWRI) are Cytoplasmic-facing. Residues 31 to 51 (VLLCFLIVFLDGLDTAAMGFI) form a helical membrane-spanning segment. The Periplasmic segment spans residues 52 to 67 (APALTQDWGIDRASLG). Residues 68 to 88 (PVMSAALIGMVFGALGSGPLA) form a helical membrane-spanning segment. At 89–94 (DRYGRK) the chain is on the cytoplasmic side. Residues 95–115 (LVLVAAVFLFGLFSLASAYST) traverse the membrane as a helical segment. Topologically, residues 116 to 119 (NVEQ) are periplasmic. A helical transmembrane segment spans residues 120–140 (LLALRFLTGLGLGAAMPNATT). Residues 141–152 (LLSEYTPERLKS) lie on the Cytoplasmic side of the membrane. Residues 153-173 (LLVTSMFCGFNLGMACGGFVS) traverse the membrane as a helical segment. At 174–184 (AKLIPLFGWHS) the chain is on the periplasmic side. A helical transmembrane segment spans residues 185 to 205 (LLLLGGLLPLVLAVVLLFRLP). Topologically, residues 206-261 (ESARYLVVRNRGSERVRQVLAPIAPAQVALARSFHVPEQQTVQARNVFAVIFSGTY) are cytoplasmic. The helical transmembrane segment at 262–282 (SAGTLLLWLTYFMGLVIVYLL) threads the bilayer. The Periplasmic segment spans residues 283–301 (TSWLPTLMRDSGASLEQAA). A helical membrane pass occupies residues 302-322 (FIGALFQFGGVLSAVAVGWAM). Residues 323–329 (DRFNPHK) are Cytoplasmic-facing. A helical transmembrane segment spans residues 330 to 350 (VIGLFYLLAGVFAWCVGQSLG). A topological domain (periplasmic) is located at residue Gln-351. The chain crosses the membrane as a helical span at residues 352–372 (VTLLATLVLLAGMCINGAQSA). Residues 373–398 (MPSLAARFYPTQGRATGVSWMLGIGR) are Cytoplasmic-facing. A helical membrane pass occupies residues 399 to 419 (FGAILGAWIGATLLGLGWNFE). Residues 420–421 (QV) are Periplasmic-facing. The chain crosses the membrane as a helical span at residues 422 to 442 (LTALVLPAALATAAVLLKGLV). Residues 443 to 448 (SHADAG) are Cytoplasmic-facing.

This sequence belongs to the major facilitator superfamily. Aromatic acid:H(+) symporter (AAHS) (TC 2.A.1.15) family.

It localises to the cell inner membrane. Functionally, transports 4-hydroxybenzoate (4-HBA) and protocatechuate across the membrane. Driven by the proton motive force. Also functions as a chemoreceptor, which is required for chemotaxis to aromatic acids. In Pseudomonas aeruginosa (strain ATCC 15692 / DSM 22644 / CIP 104116 / JCM 14847 / LMG 12228 / 1C / PRS 101 / PAO1), this protein is 4-hydroxybenzoate transporter PcaK (pcaK).